The sequence spans 343 residues: MLISTPHFWWKDKSFLRFLLTPVSWGYGYFSHRCMVRELPVIDLPVLCIGNFTCGGAGKTPVVIAFAKVAKELGFLPGVVSRGYGGAVKGVHLINEQFDNARDVGDEALLLARHAFVAISSNRYVAAQRLKEEGCNLILMDDGFQSRRLYMDYALLVVDAMRGFGNGAVFPAGPLRAPLKTQFSLMDSVLLIGHSDACENVVFLVTRTGKALHHAHLKSLASDEVMGKSFLAFAGIGNPNKFFKSIKELSGRVVQTYSYPDHYFFTDTDLKNLIQQAKMNNLWLATTAKDYTRIQTSHVQKDLKNLIVFDVEVDFVQEDFCRMILEEVMSRFRERKTLFNLHF.

Residue Thr-53–Thr-60 coordinates ATP.

Belongs to the LpxK family.

The enzyme catalyses a lipid A disaccharide + ATP = a lipid IVA + ADP + H(+). It functions in the pathway glycolipid biosynthesis; lipid IV(A) biosynthesis; lipid IV(A) from (3R)-3-hydroxytetradecanoyl-[acyl-carrier-protein] and UDP-N-acetyl-alpha-D-glucosamine: step 6/6. Transfers the gamma-phosphate of ATP to the 4'-position of a tetraacyldisaccharide 1-phosphate intermediate (termed DS-1-P) to form tetraacyldisaccharide 1,4'-bis-phosphate (lipid IVA). This Bartonella quintana (strain Toulouse) (Rochalimaea quintana) protein is Tetraacyldisaccharide 4'-kinase.